Consider the following 157-residue polypeptide: Protein Smg homolog (157 aa).

It belongs to the Smg family.

The chain is Protein Smg homolog from Stenotrophomonas maltophilia (strain R551-3).